Consider the following 151-residue polypeptide: Large ribosomal subunit protein bL9 (151 aa).

It belongs to the bacterial ribosomal protein bL9 family.

Functionally, binds to the 23S rRNA. The polypeptide is Large ribosomal subunit protein bL9 (Lacticaseibacillus casei (strain BL23) (Lactobacillus casei)).